A 158-amino-acid polypeptide reads, in one-letter code: Osmosensory protein A (158 aa).

At threonine 2 the chain carries Phosphothreonine; by PknD. Residues 28-139 form the STAS domain; it reads AQIRAYLHHL…RSVHKALHDL (112 aa).

This sequence belongs to the anti-sigma-factor antagonist family. Interacts with Rv2638. Phosphorylation abolishes binding to Rv2638. In terms of processing, phosphorylated on Thr-2 by the serine/threonine-protein kinase PknD. Also phosphorylated to a lesser extent by PknB and PknE. Dephosphorylated by PstP.

Its activity is regulated as follows. Regulated by PknD under osmotic stress. In terms of biological role, part of a signaling pathway that enables adaptation to osmotic stress through cell wall remodeling and virulence factor production. Unphosphorylated OprA forms a complex with the anti-anti-sigma-factor paralog Rv2638 that dissociates on OprA phosphorylation by PknD. Phosphorylation of OprA may stimulate the release of SigF from an inhibitory complex and enable the transcription of osmotically regulated genes, such as oprA and the ESX-1-associated virulence factor espA. The polypeptide is Osmosensory protein A (Mycobacterium tuberculosis (strain ATCC 25618 / H37Rv)).